A 119-amino-acid chain; its full sequence is Protein SPIRAL1 (119 aa).

Positions 1 to 11 are enriched in gly residues; sequence MGRGNSCGGGQ. Disordered stretches follow at residues 1–47 and 85–105; these read MGRG…PPVT and EGQNTGNFLTDRPSTKVHAAP. The span at 24-34 shows a compositional bias: pro residues; the sequence is APKPVPAPRPA.

The protein belongs to the SPIRAL1 family. Ubiquitinated. Upon salt-stress induction, it is subject to proteasome-dependent degradation. As to expression, ubiquitous. High expression was associated with tissues undergoing rapid cell expansion, including the root elongation zone, hypocotyls of dark grown-seedlings, and cotyledons of light-grown seedlings.

It localises to the cytoplasm. The protein resides in the cytoskeleton. It is found in the phragmoplast. Its subcellular location is the spindle. Its function is as follows. Required for directional control of cell elongation. Stabilizes growing ends of cortical microtubules and influences their dynamic properties. Acts redundantly with SP1Ls in maintaining the cortical microtubules organization essential for anisotropic cell growth. Plays a key role in salt stress-induced microtubules disassembly. This chain is Protein SPIRAL1 (SPR1), found in Arabidopsis thaliana (Mouse-ear cress).